The following is a 206-amino-acid chain: MDLKLIELASGKEAGSVKVSEAIFGAEFNEALVHQVVNAYLAGARSGTKGQKNRSAVRGGGAKPWAQKGSGRARAGTSRGPIWIGGGRAFPGHNRDFSQKVNKKMYRGAMKAIFSELARTERLVVVDDFKVEAPKTKDFVAKLNTLNLKDALVITEGFDEYLYLSARNLYHADVCDVASIDPVSLVGFKSIVVTQGAIKQLEEKLA.

Positions 47-79 (GTKGQKNRSAVRGGGAKPWAQKGSGRARAGTSR) are disordered. The segment covering 69 to 79 (GSGRARAGTSR) has biased composition (low complexity).

The protein belongs to the universal ribosomal protein uL4 family. As to quaternary structure, part of the 50S ribosomal subunit.

Functionally, one of the primary rRNA binding proteins, this protein initially binds near the 5'-end of the 23S rRNA. It is important during the early stages of 50S assembly. It makes multiple contacts with different domains of the 23S rRNA in the assembled 50S subunit and ribosome. Forms part of the polypeptide exit tunnel. In Hydrogenovibrio crunogenus (strain DSM 25203 / XCL-2) (Thiomicrospira crunogena), this protein is Large ribosomal subunit protein uL4.